The chain runs to 122 residues: Large ribosomal subunit protein uL14 (122 aa).

It belongs to the universal ribosomal protein uL14 family. Part of the 50S ribosomal subunit. Forms a cluster with proteins L3 and L19. In the 70S ribosome, L14 and L19 interact and together make contacts with the 16S rRNA in bridges B5 and B8.

Its function is as follows. Binds to 23S rRNA. Forms part of two intersubunit bridges in the 70S ribosome. In Methylobacterium sp. (strain 4-46), this protein is Large ribosomal subunit protein uL14.